The following is a 165-amino-acid chain: Protein NKG7 (165 aa).

Helical transmembrane passes span 9-29, 61-81, 92-112, and 133-153; these read LFAG…DFWI, FCIL…LSCI, LVST…MAVY, and FYLG…SLGA.

Belongs to the PMP-22/EMP/MP20 family. In terms of tissue distribution, predominantly expressed by leukocytes with cytotoxic activity such as CD8(+) T-cells and natural killer cells.

It is found in the cell membrane. The protein resides in the cytolytic granule membrane. In terms of biological role, regulates cytotoxic granule exocytosis in effector lymphocytes, thus acting as a critical mediator of inflammation in a broad range of infectious and non-infectious diseases. Essential for cytotoxic degranulation of natural killer (NK) cells and CD8(+) T-cells and for the activation of CD4(+) T-cells following infection. Plays a critical role in CD8(+) T-cell and NK cell-mediated cytolysis of target cells and contributes to the cytolytic activity via the perforin/granzyme pathway by enhancing exocytosis of LAMP1-carrying lytic granules. Contributes to NK cell-mediated control of cancer metastasis. The polypeptide is Protein NKG7 (Nkg7) (Mus musculus (Mouse)).